The following is a 152-amino-acid chain: Snaclec lebecin subunit alpha (152 aa).

Positions 1-23 are cleaved as a signal peptide; it reads MGRSISVSFGLLVVFLSLSGTGA. Disulfide bonds link C27/C38, C54/C147, and C122/C139. Residues 34–148 enclose the C-type lectin domain; it reads YEGGCYYVFD…CELAYHFICS (115 aa).

As to quaternary structure, heterodimer with the beta subunit (AC W5XCJ6); disulfide-linked. In terms of tissue distribution, expressed by the venom gland.

It localises to the secreted. Functionally, inhibits human breast cancer cells (MDA-MB231) migration and proliferation, as well as their adhesion to fibrinogen and fibronectin. This inhibition may be due to the binding to receptors of the integrin family, probably alpha-v/beta-3 (ITGAV/ITGB3) (40% inhibition of cell adhesion) and alpha-5/beta-1 (ITGA5/ITGB1) (by comparison with lebectin). The chain is Snaclec lebecin subunit alpha from Macrovipera lebetinus (Levantine viper).